Here is a 23-residue protein sequence, read N- to C-terminus: Apolipophorin-1 (23 aa).

Basic and acidic residues predominate over residues 1-15 (SVKSEVDNFDKHLKA). The interval 1 to 23 (SVKSEVDNFDKHLKAESAPFNNE) is disordered.

Expressed in hemolymph.

The protein localises to the secreted. Functionally, constitutes the major component of lipophorin, which mediates transport for various types of lipids in hemolymph. Acts by forming lipoprotein particles that bind lipoproteins and lipids. The polypeptide is Apolipophorin-1 (Galleria mellonella (Greater wax moth)).